We begin with the raw amino-acid sequence, 131 residues long: Putative gamma-taxilin 2 (131 aa).

The protein belongs to the taxilin family. As to expression, ubiquitously expressed.

The protein is Putative gamma-taxilin 2 (TXLNGY) of Homo sapiens (Human).